A 304-amino-acid polypeptide reads, in one-letter code: 2-phospho-L-lactate transferase (304 aa).

Aspartate 49 lines the 7,8-didemethyl-8-hydroxy-5-deazariboflavin pocket.

The protein belongs to the CofD family. As to quaternary structure, homodimer. It depends on Mg(2+) as a cofactor.

It carries out the reaction (2S)-lactyl-2-diphospho-5'-guanosine + 7,8-didemethyl-8-hydroxy-5-deazariboflavin = oxidized coenzyme F420-0 + GMP + H(+). It functions in the pathway cofactor biosynthesis; coenzyme F420 biosynthesis. In terms of biological role, catalyzes the transfer of the 2-phospholactate moiety from (2S)-lactyl-2-diphospho-5'-guanosine to 7,8-didemethyl-8-hydroxy-5-deazariboflavin (FO) with the formation of oxidized coenzyme F420-0 and GMP. The polypeptide is 2-phospho-L-lactate transferase (Methanocorpusculum labreanum (strain ATCC 43576 / DSM 4855 / Z)).